A 267-amino-acid polypeptide reads, in one-letter code: Rhomboid-type serine protease 2 (267 aa).

The next 6 helical transmembrane spans lie at 20-40, 67-87, 99-119, 126-146, 155-179, and 185-206; these read LPLF…ASLQ, FPLI…LTPL, TSLA…YVLI, ANHG…MESI, FVIG…AALI, and LGHL…KLLA. Residue serine 134 is the Nucleophile of the active site. Histidine 187 is a catalytic residue. The segment at 247–267 is disordered; sequence RPGPSGSAATELVGTTQRLGP.

The protein belongs to the peptidase S54 family.

It is found in the golgi apparatus membrane. It localises to the golgi apparatus. The protein localises to the cis-Golgi network membrane. It carries out the reaction Cleaves type-1 transmembrane domains using a catalytic dyad composed of serine and histidine that are contributed by different transmembrane domains.. Functionally, probable rhomboid-type serine protease that catalyzes intramembrane proteolysis. The polypeptide is Rhomboid-type serine protease 2 (RBD2) (Gibberella zeae (strain ATCC MYA-4620 / CBS 123657 / FGSC 9075 / NRRL 31084 / PH-1) (Wheat head blight fungus)).